The chain runs to 29 residues: Snaclec multactivase regulatory subunit (29 aa).

The 29-residue stretch at 1–29 (DCLPGWSVYEGRCYKVFNQKTWKAAEKFC) folds into the C-type lectin domain. An intrachain disulfide couples Cys2 to Cys13.

This sequence belongs to the snaclec family. Heterodimer of a metalloproteinase subunit and a regulatory subunit comprising two homologous polypeptides disulfide-linked. As to expression, expressed by the venom gland.

Its subcellular location is the secreted. Functionally, multactivase, a carinactivase-like calcium-dependent prothrombin activator, activates prothrombin via recognition of the calcium ion bound conformation of its gamma-carboxyglutamic acid (GLA) domain, and the subsequent conversion of prothrombin to active thrombin is catalyzed by the catalytic subunit. The polypeptide is Snaclec multactivase regulatory subunit (Echis multisquamatus (Central Asian sand viper)).